The following is a 235-amino-acid chain: Uridylate kinase (235 aa).

9-12 (KLSG) is an ATP binding site. An involved in allosteric activation by GTP region spans residues 17–22 (GNQGYG). Residue G51 participates in UMP binding. ATP contacts are provided by G52 and R56. Residues D71 and 132–139 (CGNPFFTT) contribute to the UMP site. The ATP site is built by T159, Y165, and D168.

This sequence belongs to the UMP kinase family. As to quaternary structure, homohexamer.

The protein localises to the cytoplasm. It carries out the reaction UMP + ATP = UDP + ADP. It functions in the pathway pyrimidine metabolism; CTP biosynthesis via de novo pathway; UDP from UMP (UMPK route): step 1/1. Its activity is regulated as follows. Allosterically activated by GTP. Inhibited by UTP. In terms of biological role, catalyzes the reversible phosphorylation of UMP to UDP. The chain is Uridylate kinase from Synechococcus sp. (strain CC9311).